The sequence spans 156 residues: 6,7-dimethyl-8-ribityllumazine synthase (156 aa).

Residues Phe-22, 57–59 (AYE), and 81–83 (TVI) each bind 5-amino-6-(D-ribitylamino)uracil. 86-87 (GT) provides a ligand contact to (2S)-2-hydroxy-3-oxobutyl phosphate. His-89 (proton donor) is an active-site residue. Phe-114 is a 5-amino-6-(D-ribitylamino)uracil binding site. Residue Arg-128 participates in (2S)-2-hydroxy-3-oxobutyl phosphate binding.

The protein belongs to the DMRL synthase family. As to quaternary structure, forms an icosahedral capsid composed of 60 subunits, arranged as a dodecamer of pentamers.

The enzyme catalyses (2S)-2-hydroxy-3-oxobutyl phosphate + 5-amino-6-(D-ribitylamino)uracil = 6,7-dimethyl-8-(1-D-ribityl)lumazine + phosphate + 2 H2O + H(+). The protein operates within cofactor biosynthesis; riboflavin biosynthesis; riboflavin from 2-hydroxy-3-oxobutyl phosphate and 5-amino-6-(D-ribitylamino)uracil: step 1/2. In terms of biological role, catalyzes the formation of 6,7-dimethyl-8-ribityllumazine by condensation of 5-amino-6-(D-ribitylamino)uracil with 3,4-dihydroxy-2-butanone 4-phosphate. This is the penultimate step in the biosynthesis of riboflavin. The protein is 6,7-dimethyl-8-ribityllumazine synthase of Sodalis glossinidius (strain morsitans).